A 440-amino-acid polypeptide reads, in one-letter code: Xaa-Pro dipeptidase (440 aa).

Mn(2+)-binding residues include Asp244, Asp255, His335, Glu380, and Glu419.

The protein belongs to the peptidase M24B family. Bacterial-type prolidase subfamily. The cofactor is Mn(2+).

It carries out the reaction Xaa-L-Pro dipeptide + H2O = an L-alpha-amino acid + L-proline. In terms of biological role, splits dipeptides with a prolyl residue in the C-terminal position. The protein is Xaa-Pro dipeptidase of Shewanella denitrificans (strain OS217 / ATCC BAA-1090 / DSM 15013).